The chain runs to 339 residues: 7,8-didemethyl-8-hydroxy-5-deazariboflavin synthase (339 aa).

In terms of domain architecture, Radical SAM core spans 25–256; the sequence is ATYSPAYTIV…PDITIQIPPN (232 aa). 3 residues coordinate [4Fe-4S] cluster: C39, C43, and C46.

The protein belongs to the radical SAM superfamily. CofG family. Consists of two subunits, CofG and CofH. The cofactor is [4Fe-4S] cluster.

The enzyme catalyses 5-amino-5-(4-hydroxybenzyl)-6-(D-ribitylimino)-5,6-dihydrouracil + S-adenosyl-L-methionine = 7,8-didemethyl-8-hydroxy-5-deazariboflavin + 5'-deoxyadenosine + L-methionine + NH4(+) + H(+). Its pathway is cofactor biosynthesis; coenzyme F0 biosynthesis. In terms of biological role, catalyzes the radical-mediated synthesis of 7,8-didemethyl-8-hydroxy-5-deazariboflavin from 5-amino-5-(4-hydroxybenzyl)-6-(D-ribitylimino)-5,6-dihydrouracil. This Nostoc sp. (strain PCC 7120 / SAG 25.82 / UTEX 2576) protein is 7,8-didemethyl-8-hydroxy-5-deazariboflavin synthase.